The sequence spans 94 residues: uncharacterized protein (94 aa).

A signal peptide spans Met1–Ala25.

This is an uncharacterized protein from Archaeoglobus fulgidus (strain ATCC 49558 / DSM 4304 / JCM 9628 / NBRC 100126 / VC-16).